A 472-amino-acid polypeptide reads, in one-letter code: UDP-N-acetylmuramoyl-L-alanyl-D-glutamate--2,6-diaminopimelate ligase (472 aa).

Ser-21 is a binding site for UDP-N-acetyl-alpha-D-muramoyl-L-alanyl-D-glutamate. 99–105 contacts ATP; it reads GTNGKTS. Residues 143-144, Ser-170, Gln-176, and Arg-178 contribute to the UDP-N-acetyl-alpha-D-muramoyl-L-alanyl-D-glutamate site; that span reads TT. Lys-210 carries the post-translational modification N6-carboxylysine. Residues Arg-367, 391-394, Gly-440, and Glu-444 contribute to the meso-2,6-diaminopimelate site; that span reads DNPR. Positions 391–394 match the Meso-diaminopimelate recognition motif motif; the sequence is DNPR.

This sequence belongs to the MurCDEF family. MurE subfamily. Mg(2+) is required as a cofactor. In terms of processing, carboxylation is probably crucial for Mg(2+) binding and, consequently, for the gamma-phosphate positioning of ATP.

It is found in the cytoplasm. The catalysed reaction is UDP-N-acetyl-alpha-D-muramoyl-L-alanyl-D-glutamate + meso-2,6-diaminopimelate + ATP = UDP-N-acetyl-alpha-D-muramoyl-L-alanyl-gamma-D-glutamyl-meso-2,6-diaminopimelate + ADP + phosphate + H(+). It participates in cell wall biogenesis; peptidoglycan biosynthesis. Catalyzes the addition of meso-diaminopimelic acid to the nucleotide precursor UDP-N-acetylmuramoyl-L-alanyl-D-glutamate (UMAG) in the biosynthesis of bacterial cell-wall peptidoglycan. The chain is UDP-N-acetylmuramoyl-L-alanyl-D-glutamate--2,6-diaminopimelate ligase from Anaplasma marginale (strain St. Maries).